Reading from the N-terminus, the 289-residue chain is Acetyl-coenzyme A carboxylase carboxyl transferase subunit beta (289 aa).

Residues 28–289 (VMTKCPKCKK…QGGEMAVWQS (262 aa)) form the CoA carboxyltransferase N-terminal domain. Positions 32, 35, 51, and 54 each coordinate Zn(2+). The C4-type zinc-finger motif lies at 32–54 (CPKCKKIMYTKEVLKNLKVCVNC).

The protein belongs to the AccD/PCCB family. In terms of assembly, acetyl-CoA carboxylase is a heterohexamer composed of biotin carboxyl carrier protein (AccB), biotin carboxylase (AccC) and two subunits each of ACCase subunit alpha (AccA) and ACCase subunit beta (AccD). The cofactor is Zn(2+).

It is found in the cytoplasm. It carries out the reaction N(6)-carboxybiotinyl-L-lysyl-[protein] + acetyl-CoA = N(6)-biotinyl-L-lysyl-[protein] + malonyl-CoA. Its pathway is lipid metabolism; malonyl-CoA biosynthesis; malonyl-CoA from acetyl-CoA: step 1/1. Functionally, component of the acetyl coenzyme A carboxylase (ACC) complex. Biotin carboxylase (BC) catalyzes the carboxylation of biotin on its carrier protein (BCCP) and then the CO(2) group is transferred by the transcarboxylase to acetyl-CoA to form malonyl-CoA. The chain is Acetyl-coenzyme A carboxylase carboxyl transferase subunit beta from Bacillus cereus (strain ZK / E33L).